The primary structure comprises 446 residues: Exodeoxyribonuclease 7 large subunit (446 aa).

This sequence belongs to the XseA family. Heterooligomer composed of large and small subunits.

The protein resides in the cytoplasm. It catalyses the reaction Exonucleolytic cleavage in either 5'- to 3'- or 3'- to 5'-direction to yield nucleoside 5'-phosphates.. In terms of biological role, bidirectionally degrades single-stranded DNA into large acid-insoluble oligonucleotides, which are then degraded further into small acid-soluble oligonucleotides. The polypeptide is Exodeoxyribonuclease 7 large subunit (Streptococcus agalactiae serotype III (strain NEM316)).